The chain runs to 343 residues: Cilia- and flagella-associated protein 36 (343 aa).

S85 and S147 each carry phosphoserine. The stretch at 147–187 (SDLEQEEMKILREVLRKSKEEYDQEEERKRKKQSSEAKMEE) forms a coiled coil. The interval 165-188 (KEEYDQEEERKRKKQSSEAKMEEL) is disordered. Position 201 is a phosphoserine (S201). Composition is skewed to basic and acidic residues over residues 279 to 293 (QKRD…DTRT) and 301 to 323 (QKGK…AEEK). The interval 279–323 (QKRDKLLSMRKDTRTKQIQNTEQKGKPTREAEEMTEKPEMTAEEK) is disordered.

The protein belongs to the CFAP36 family. In terms of assembly, interacts with ARL3.

It is found in the nucleus. Its subcellular location is the cytoplasm. The protein resides in the cell projection. The protein localises to the cilium. It localises to the flagellum. May act as an effector for ARL3. This Mus musculus (Mouse) protein is Cilia- and flagella-associated protein 36.